Reading from the N-terminus, the 197-residue chain is HTH-type transcriptional regulator BetI (197 aa).

An HTH tetR-type domain is found at 8–68 (PIRRSQLIHA…ATMRHLLSAL (61 aa)). Positions 31-50 (SIALIARLAGVSNGIISHYF) form a DNA-binding region, H-T-H motif.

It participates in amine and polyamine biosynthesis; betaine biosynthesis via choline pathway [regulation]. Repressor involved in the biosynthesis of the osmoprotectant glycine betaine. It represses transcription of the choline transporter BetT and the genes of BetAB involved in the synthesis of glycine betaine. This chain is HTH-type transcriptional regulator BetI, found in Pseudomonas aeruginosa (strain LESB58).